The chain runs to 937 residues: AP-2 complex subunit beta (937 aa).

Threonine 2 bears the N-acetylthreonine mark. Serine 4 bears the Phosphoserine mark. Lysine 265 carries the N6-acetyllysine modification. A disordered region spans residues leucine 593–glutamine 617. The span at valine 607–glutamine 617 shows a compositional bias: polar residues. Phosphotyrosine occurs at positions 737 and 928.

The protein belongs to the adaptor complexes large subunit family. As to quaternary structure, adaptor protein complex 2 (AP-2) is a heterotetramer composed of two large adaptins (alpha-type subunit AP2A1 or AP2A2 and beta-type subunit AP2B1), a medium adaptin (mu-type subunit AP2M1) and a small adaptin (sigma-type subunit AP2S1). Interacts with EPN1. Interacts with EPS15; clathrin competes with EPS15. Interacts with SNAP91; clathrin competes with SNAP91. Interacts with CLTC; clathrin competes with EPS15, SNAP91 and PIP5K1C. Interacts with LDLRAP1. Interacts with AMPH and BIN1. Interacts with ARF6 (GDP-bound). Interacts (dephosphorylated at Tyr-737) with ARRB1; phosphorylation of AP2B1 at Tyr-737 disrupts the interaction. Interacts with SLC2A8. Interacts with SCYL1 and SCYL2. Interacts with TGFBR1 and TGFBR2. Interacts with PIP5K1C; clathrin competes with PIP5K1C. Interacts with DENND1B. Interacts with FCHO1. Interacts with RFTN1. Interacts with KIAA1107. Together with AP2A1 or AP2A2 and AP2M1, it interacts with ADAM10; this interaction facilitates ADAM10 endocytosis from the plasma membrane during long-term potentiation in hippocampal neurons. In terms of tissue distribution, expressed in the brain (at protein level).

It localises to the cell membrane. The protein localises to the membrane. The protein resides in the coated pit. Component of the adaptor protein complex 2 (AP-2). Adaptor protein complexes function in protein transport via transport vesicles in different membrane traffic pathways. Adaptor protein complexes are vesicle coat components and appear to be involved in cargo selection and vesicle formation. AP-2 is involved in clathrin-dependent endocytosis in which cargo proteins are incorporated into vesicles surrounded by clathrin (clathrin-coated vesicles, CCVs) which are destined for fusion with the early endosome. The clathrin lattice serves as a mechanical scaffold but is itself unable to bind directly to membrane components. Clathrin-associated adaptor protein (AP) complexes which can bind directly to both the clathrin lattice and to the lipid and protein components of membranes are considered to be the major clathrin adaptors contributing the CCV formation. AP-2 also serves as a cargo receptor to selectively sort the membrane proteins involved in receptor-mediated endocytosis. AP-2 seems to play a role in the recycling of synaptic vesicle membranes from the presynaptic surface. AP-2 recognizes Y-X-X-[FILMV] (Y-X-X-Phi) and [ED]-X-X-X-L-[LI] endocytosis signal motifs within the cytosolic tails of transmembrane cargo molecules. AP-2 may also play a role in maintaining normal post-endocytic trafficking through the ARF6-regulated, non-clathrin pathway. During long-term potentiation in hippocampal neurons, AP-2 is responsible for the endocytosis of ADAM10. The AP-2 beta subunit acts via its C-terminal appendage domain as a scaffolding platform for endocytic accessory proteins; at least some clathrin-associated sorting proteins (CLASPs) are recognized by their [DE]-X(1,2)-F-X-X-[FL]-X-X-X-R motif. The AP-2 beta subunit binds to clathrin heavy chain, promoting clathrin lattice assembly; clathrin displaces at least some CLASPs from AP2B1 which probably then can be positioned for further coat assembly. The protein is AP-2 complex subunit beta (Ap2b1) of Mus musculus (Mouse).